A 108-amino-acid chain; its full sequence is UPF0102 protein Sbal_4100 (108 aa).

This sequence belongs to the UPF0102 family.

The polypeptide is UPF0102 protein Sbal_4100 (Shewanella baltica (strain OS155 / ATCC BAA-1091)).